The following is a 219-amino-acid chain: Large ribosomal subunit protein uL3 (219 aa).

The tract at residues Phe-124–Ile-154 is disordered.

It belongs to the universal ribosomal protein uL3 family. In terms of assembly, part of the 50S ribosomal subunit. Forms a cluster with proteins L14 and L19.

In terms of biological role, one of the primary rRNA binding proteins, it binds directly near the 3'-end of the 23S rRNA, where it nucleates assembly of the 50S subunit. The polypeptide is Large ribosomal subunit protein uL3 (Phytoplasma mali (strain AT)).